Consider the following 125-residue polypeptide: Large ribosomal subunit protein uL22 (125 aa).

It belongs to the universal ribosomal protein uL22 family. As to quaternary structure, part of the 50S ribosomal subunit.

In terms of biological role, this protein binds specifically to 23S rRNA; its binding is stimulated by other ribosomal proteins, e.g. L4, L17, and L20. It is important during the early stages of 50S assembly. It makes multiple contacts with different domains of the 23S rRNA in the assembled 50S subunit and ribosome. Its function is as follows. The globular domain of the protein is located near the polypeptide exit tunnel on the outside of the subunit, while an extended beta-hairpin is found that lines the wall of the exit tunnel in the center of the 70S ribosome. The sequence is that of Large ribosomal subunit protein uL22 from Novosphingobium aromaticivorans (strain ATCC 700278 / DSM 12444 / CCUG 56034 / CIP 105152 / NBRC 16084 / F199).